A 149-amino-acid polypeptide reads, in one-letter code: Calmodulin (149 aa).

Residue A2 is modified to N-acetylalanine. 4 EF-hand domains span residues 8 to 43 (EQIA…LGQN), 44 to 79 (PTEA…KMKD), 81 to 116 (DSEE…LGEK), and 117 to 149 (LTDE…MMAK). Residues D21, D23, D25, C27, E32, D57, D59, N61, T63, E68, D94, D96, N98, and E105 each contribute to the Ca(2+) site. At K116 the chain carries N6,N6,N6-trimethyllysine. Ca(2+) contacts are provided by D130, D132, D134, Q136, and E141.

The protein belongs to the calmodulin family.

Functionally, calmodulin mediates the control of a large number of enzymes, ion channels and other proteins by Ca(2+). Among the enzymes to be stimulated by the calmodulin-Ca(2+) complex are a number of protein kinases and phosphatases. This is Calmodulin (CALM1) from Zea mays (Maize).